Reading from the N-terminus, the 42-residue chain is Cytochrome b559 subunit beta (42 aa).

A helical transmembrane segment spans residues Trp17–Ser33. His21 is a heme binding site.

This sequence belongs to the PsbE/PsbF family. Heterodimer of an alpha subunit and a beta subunit. PSII is composed of 1 copy each of membrane proteins PsbA, PsbB, PsbC, PsbD, PsbE, PsbF, PsbH, PsbI, PsbJ, PsbK, PsbL, PsbM, PsbT, PsbX, PsbY, PsbZ, Psb30/Ycf12, at least 3 peripheral proteins of the oxygen-evolving complex and a large number of cofactors. It forms dimeric complexes. Heme b is required as a cofactor.

It localises to the plastid. Its subcellular location is the cyanelle thylakoid membrane. Its function is as follows. This b-type cytochrome is tightly associated with the reaction center of photosystem II (PSII). PSII is a light-driven water:plastoquinone oxidoreductase that uses light energy to abstract electrons from H(2)O, generating O(2) and a proton gradient subsequently used for ATP formation. It consists of a core antenna complex that captures photons, and an electron transfer chain that converts photonic excitation into a charge separation. The protein is Cytochrome b559 subunit beta of Cyanophora paradoxa.